The sequence spans 281 residues: Alcohol dehydrogenase-related 31 kDa protein (281 aa).

Residue 11-34 (YVADCGGIALETSKVLMTKNIAKL) coordinates NAD(+). Ser139 lines the substrate pocket. Tyr152 acts as the Proton acceptor in catalysis.

Belongs to the short-chain dehydrogenases/reductases (SDR) family.

This chain is Alcohol dehydrogenase-related 31 kDa protein (Adhr), found in Drosophila ambigua (Fruit fly).